The following is a 687-amino-acid chain: Mu-like prophage FluMu transposase A (687 aa).

Residues 8-74 (THYSVYELAN…ELLLKTTPEQ (67 aa)) enclose the HTH Mu-type domain. Residues 398-417 (PIERAFSHGGLGDYVDKHLL) constitute a DNA-binding region (H-T-H motif).

Functionally, this transposase is essential for integration, replication-transposition, and excision of Mu-like viral DNA. The protein is Mu-like prophage FluMu transposase A of Haemophilus influenzae (strain ATCC 51907 / DSM 11121 / KW20 / Rd).